We begin with the raw amino-acid sequence, 268 residues long: Lipase (268 aa).

Positions 1 to 34 (MRLSRRAATASALLLTPALALFGASAAVSAPRIQ) are cleaved as a signal peptide. The Nucleophile role is filled by serine 44. 3 cysteine pairs are disulfide-bonded: cysteine 61–cysteine 86, cysteine 127–cysteine 135, and cysteine 185–cysteine 232. Histidine 250 is an active-site residue.

As to quaternary structure, monomer.

It localises to the secreted. It catalyses the reaction a triacylglycerol + H2O = a diacylglycerol + a fatty acid + H(+). The enzyme catalyses hexadecanoyl-CoA + H2O = hexadecanoate + CoA + H(+). Inhibited by 3,4-dichloroisocoumarin and tetrahydrolipstatin in the absence of substrate, but by phenylmethylsulfonyl fluoride (PMSF) only in the presence of substrate. Several water-miscible solvents enhance the lipase hydrolytic activity in vitro. Tetrahydrofuran and N,N-dimethylformamide (both 50%) inactivate the enzyme with t1/2 of 5 minutes and t1/2 of 2 hours, respectively. Functionally, catalyzes the hydrolysis of p-nitrophenyl esters, alpha- and beta-naphthyl esters, and triacylglycerols, with a preference for medium acyl chain length (C8-C12). Shows a much higher hydrolysis rate of glycerol esters of unsaturated C16 and C18 fatty acids than that of their saturated counterparts, and a preference for cis double bond. Is also able to hydrolyze several natural oils and Tween detergents. Also displays thioesterase and phospholipase activities, towards palmitoyl-coenzyme A and diheptanoyl glycerophosphocholine, respectively. Shows transesterification activity of racemic 1-phenyl ethanol with vinyl acetate in hexane, proceeding with partial (R)-enantioselectivity. In Streptomyces rimosus, this protein is Lipase.